Here is a 932-residue protein sequence, read N- to C-terminus: Protocadherin gamma-A12 (932 aa).

A signal peptide spans 1–29 (MIPARLHRDYKGLVLLGILLGTLWETGCT). 6 Cadherin domains span residues 30-133 (QIRY…APYF), 134-242 (RESE…APAF), 243-347 (AQPE…APEV), 348-452 (VLTS…PPVF), 453-562 (PQAS…APEI), and 570-683 (DGST…SPAN). Over 30–692 (QIRYSVPEEL…NSETSDLTLY (663 aa)) the chain is Extracellular. N-linked (GlcNAc...) asparagine glycosylation is found at Asn-265, Asn-419, and Asn-545. A helical transmembrane segment spans residues 693–713 (LVVAVAAVSCVFLAFVILLLA). Residues 714-932 (LRLRRWHKSR…KKKSGKKEKK (219 aa)) lie on the Cytoplasmic side of the membrane. Disordered stretches follow at residues 803–841 (GHGL…WPNN) and 902–932 (ATLT…KEKK). A compositionally biased stretch (polar residues) spans 816–841 (WRFSQAQRPGTSGSQNGDDTGTWPNN). Over residues 922–932 (NKKKSGKKEKK) the composition is skewed to basic residues.

The protein resides in the cell membrane. In terms of biological role, potential calcium-dependent cell-adhesion protein. May be involved in the establishment and maintenance of specific neuronal connections in the brain. This is Protocadherin gamma-A12 (PCDHGA12) from Pan troglodytes (Chimpanzee).